Here is a 179-residue protein sequence, read N- to C-terminus: MTSALFGLNNLAPEGVGQNFRTTMRRFPATVTVITACATGDQRDHGMTVTAVTSVSMEPPSLLVCLNNRTFLHELLLCRPDFIVNVLTQDQIALSDAFSGKVSPEERFRNGEWQRHDNGVLYLPTAHAAIACRRVAAMPYGTHTVFIGQVVSADVSETTRPLLYENAQYCAASPAGLSA.

This sequence belongs to the non-flavoprotein flavin reductase family. In terms of assembly, the FADH(2)-dependent resorcinol hydroxylase is composed of two subunits, GraA (the oxygenase component) and GraD (the reductase component). Both subunits are required for activity.

It catalyses the reaction FADH2 + NAD(+) = FAD + NADH + 2 H(+). The protein operates within aromatic compound metabolism. In terms of biological role, involved in the gamma-resorcylate (2,6-dihydroxybenzoate) catabolism. Reductase component of the resorcinol hydroxylase, which catalyzes the FADPH-dependent conversion of resorcinol to hydroxyquinol. Catalyzes the reduction of FAD by NADH. The reduced flavin is then transferred to the oxygenase component GraA. The protein is FADH(2)-dependent resorcinol hydroxylase, reductase component of Rhizobium sp. (strain MTP-10005).